Reading from the N-terminus, the 154-residue chain is UPF0178 protein YaiI (154 aa).

The protein belongs to the UPF0178 family.

The chain is UPF0178 protein YaiI from Escherichia fergusonii (strain ATCC 35469 / DSM 13698 / CCUG 18766 / IAM 14443 / JCM 21226 / LMG 7866 / NBRC 102419 / NCTC 12128 / CDC 0568-73).